A 401-amino-acid chain; its full sequence is Carbamoyl phosphate synthase small chain (401 aa).

Residues 1 to 203 (MTATPAWTIQ…EGYSTLGETD (203 aa)) form a CPSase region. The L-glutamine site is built by S56, G255, and G257. The 189-residue stretch at 207 to 395 (HVVALDYGVK…LNLIREKKGE (189 aa)) folds into the Glutamine amidotransferase type-1 domain. The active-site Nucleophile is the C284. 5 residues coordinate L-glutamine: L285, Q288, N326, G328, and F329. Residues H368 and E370 contribute to the active site.

It belongs to the CarA family. As to quaternary structure, composed of two chains; the small (or glutamine) chain promotes the hydrolysis of glutamine to ammonia, which is used by the large (or ammonia) chain to synthesize carbamoyl phosphate. Tetramer of heterodimers (alpha,beta)4.

The catalysed reaction is hydrogencarbonate + L-glutamine + 2 ATP + H2O = carbamoyl phosphate + L-glutamate + 2 ADP + phosphate + 2 H(+). It carries out the reaction L-glutamine + H2O = L-glutamate + NH4(+). Its pathway is amino-acid biosynthesis; L-arginine biosynthesis; carbamoyl phosphate from bicarbonate: step 1/1. It functions in the pathway pyrimidine metabolism; UMP biosynthesis via de novo pathway; (S)-dihydroorotate from bicarbonate: step 1/3. Functionally, small subunit of the glutamine-dependent carbamoyl phosphate synthetase (CPSase). CPSase catalyzes the formation of carbamoyl phosphate from the ammonia moiety of glutamine, carbonate, and phosphate donated by ATP, constituting the first step of 2 biosynthetic pathways, one leading to arginine and/or urea and the other to pyrimidine nucleotides. The small subunit (glutamine amidotransferase) binds and cleaves glutamine to supply the large subunit with the substrate ammonia. This Rhizobium meliloti (strain 1021) (Ensifer meliloti) protein is Carbamoyl phosphate synthase small chain.